A 648-amino-acid polypeptide reads, in one-letter code: Macrolide export ATP-binding/permease protein MacB (648 aa).

Residues 5-243 (LELCNVSRSY…QGVDAAVVNT (239 aa)) enclose the ABC transporter domain. Position 41-48 (41-48 (GVSGSGKS)) interacts with ATP. The next 5 membrane-spanning stretches (helical) occupy residues 273–293 (LLTM…VVVG), 417–437 (ANVV…IGVA), 523–543 (LFLT…VMNI), 578–598 (LVCL…AFML), and 611–631 (LTAL…FGWL).

It belongs to the ABC transporter superfamily. Macrolide exporter (TC 3.A.1.122) family. In terms of assembly, homodimer. Part of the tripartite efflux system MacAB-TolC, which is composed of an inner membrane transporter, MacB, a periplasmic membrane fusion protein, MacA, and an outer membrane component, TolC. The complex forms a large protein conduit and can translocate molecules across both the inner and outer membranes. Interacts with MacA.

It is found in the cell inner membrane. Its function is as follows. Part of the tripartite efflux system MacAB-TolC. MacB is a non-canonical ABC transporter that contains transmembrane domains (TMD), which form a pore in the inner membrane, and an ATP-binding domain (NBD), which is responsible for energy generation. Confers resistance against macrolides. The sequence is that of Macrolide export ATP-binding/permease protein MacB from Salmonella paratyphi A (strain ATCC 9150 / SARB42).